The following is a 119-amino-acid chain: Large ribosomal subunit protein uL18 (119 aa).

This sequence belongs to the universal ribosomal protein uL18 family. Part of the 50S ribosomal subunit; part of the 5S rRNA/L5/L18/L25 subcomplex. Contacts the 5S and 23S rRNAs.

In terms of biological role, this is one of the proteins that bind and probably mediate the attachment of the 5S RNA into the large ribosomal subunit, where it forms part of the central protuberance. In Mesorhizobium japonicum (strain LMG 29417 / CECT 9101 / MAFF 303099) (Mesorhizobium loti (strain MAFF 303099)), this protein is Large ribosomal subunit protein uL18.